A 65-amino-acid chain; its full sequence is Lantibiotic lacticin 3147 A2 (65 aa).

Residues 1 to 36 constitute a propeptide that is removed on maturation; sequence MKEKNMKKNDTIELQLGKYLEDDMIELAEGDESHGG. At Thr-37 the chain carries 2-oxobutanoic acid. Thr-38 and Thr-41 each carry 2,3-didehydrobutyrine. Residues Ser-45 and Ser-48 each carry the 2,3-didehydroalanine (Ser) modification. Residues 52–56 constitute a cross-link (lanthionine (Ser-Cys)); sequence STNTC. Cross-links (beta-methyllanthionine (Thr-Cys)) lie at residues 58–61 and 62–65; these read TTKC and TRAC.

Post-translationally, maturation of lantibiotics involves the enzymatic conversion of Thr, and Ser into dehydrated AA and the formation of thioether bonds with cysteine. This is followed by membrane translocation and cleavage of the modified precursor. In terms of processing, it is not established whether the 2,3-didehydrobutyrines are the E- or Z-isomers. In the NMR model they were assumed to be the Z-isomer.

The protein resides in the secreted. Its function is as follows. Lanthionine-containing peptide antibiotic (lantibiotic) active on Gram-positive bacteria. The bactericidal activity of lantibiotics is based on depolarization of energized bacterial cytoplasmic membranes, initiated by the formation of aqueous transmembrane pores. When present individually lacticin 3147 A2 exhibits weak activity towards L.lactis strain AM2 and L.lactis strain HP, and no activity towards L.lactis strain IFPL359, but when combined with lacticin 3147 A1 it displays strong activity towards all three strains. The chain is Lantibiotic lacticin 3147 A2 from Lactococcus lactis subsp. lactis (Streptococcus lactis).